The sequence spans 724 residues: Phosphoribosylformylglycinamidine synthase subunit PurL (724 aa).

His-34 is a catalytic residue. Tyr-37 contributes to the ATP binding site. Residue Glu-78 coordinates Mg(2+). Residues 79 to 82 (SHNH) and Arg-101 contribute to the substrate site. His-80 serves as the catalytic Proton acceptor. Asp-102 lines the Mg(2+) pocket. Gln-226 contributes to the substrate binding site. A Mg(2+)-binding site is contributed by Asp-254. Residue 298–300 (ESQ) participates in substrate binding. Asp-480 and Gly-517 together coordinate ATP. Residue Asn-518 participates in Mg(2+) binding. Substrate is bound at residue Ser-520.

It belongs to the FGAMS family. As to quaternary structure, monomer. Part of the FGAM synthase complex composed of 1 PurL, 1 PurQ and 2 PurS subunits.

It is found in the cytoplasm. The catalysed reaction is N(2)-formyl-N(1)-(5-phospho-beta-D-ribosyl)glycinamide + L-glutamine + ATP + H2O = 2-formamido-N(1)-(5-O-phospho-beta-D-ribosyl)acetamidine + L-glutamate + ADP + phosphate + H(+). Its pathway is purine metabolism; IMP biosynthesis via de novo pathway; 5-amino-1-(5-phospho-D-ribosyl)imidazole from N(2)-formyl-N(1)-(5-phospho-D-ribosyl)glycinamide: step 1/2. Part of the phosphoribosylformylglycinamidine synthase complex involved in the purines biosynthetic pathway. Catalyzes the ATP-dependent conversion of formylglycinamide ribonucleotide (FGAR) and glutamine to yield formylglycinamidine ribonucleotide (FGAM) and glutamate. The FGAM synthase complex is composed of three subunits. PurQ produces an ammonia molecule by converting glutamine to glutamate. PurL transfers the ammonia molecule to FGAR to form FGAM in an ATP-dependent manner. PurS interacts with PurQ and PurL and is thought to assist in the transfer of the ammonia molecule from PurQ to PurL. This Methanopyrus kandleri (strain AV19 / DSM 6324 / JCM 9639 / NBRC 100938) protein is Phosphoribosylformylglycinamidine synthase subunit PurL.